Reading from the N-terminus, the 76-residue chain is Small ribosomal subunit protein bS18 (76 aa).

This sequence belongs to the bacterial ribosomal protein bS18 family. In terms of assembly, part of the 30S ribosomal subunit. Forms a tight heterodimer with protein bS6.

Binds as a heterodimer with protein bS6 to the central domain of the 16S rRNA, where it helps stabilize the platform of the 30S subunit. The polypeptide is Small ribosomal subunit protein bS18 (Pseudomonas aeruginosa (strain LESB58)).